The primary structure comprises 51 residues: Large ribosomal subunit protein eL39x (51 aa).

This sequence belongs to the eukaryotic ribosomal protein eL39 family.

The chain is Large ribosomal subunit protein eL39x (RPL39C) from Oryza sativa subsp. japonica (Rice).